A 481-amino-acid chain; its full sequence is Probable glycine dehydrogenase (decarboxylating) subunit 2 (481 aa).

Lysine 265 carries the post-translational modification N6-(pyridoxal phosphate)lysine.

It belongs to the GcvP family. C-terminal subunit subfamily. As to quaternary structure, the glycine cleavage system is composed of four proteins: P, T, L and H. In this organism, the P 'protein' is a heterodimer of two subunits. It depends on pyridoxal 5'-phosphate as a cofactor.

The catalysed reaction is N(6)-[(R)-lipoyl]-L-lysyl-[glycine-cleavage complex H protein] + glycine + H(+) = N(6)-[(R)-S(8)-aminomethyldihydrolipoyl]-L-lysyl-[glycine-cleavage complex H protein] + CO2. Functionally, the glycine cleavage system catalyzes the degradation of glycine. The P protein binds the alpha-amino group of glycine through its pyridoxal phosphate cofactor; CO(2) is released and the remaining methylamine moiety is then transferred to the lipoamide cofactor of the H protein. This chain is Probable glycine dehydrogenase (decarboxylating) subunit 2, found in Thermosipho melanesiensis (strain DSM 12029 / CIP 104789 / BI429).